We begin with the raw amino-acid sequence, 317 residues long: Ribonuclease Z (317 aa).

Zn(2+)-binding residues include His63, His65, Asp67, His68, His143, Asp213, and His273. Catalysis depends on Asp67, which acts as the Proton acceptor.

Belongs to the RNase Z family. As to quaternary structure, homodimer. The cofactor is Zn(2+).

It catalyses the reaction Endonucleolytic cleavage of RNA, removing extra 3' nucleotides from tRNA precursor, generating 3' termini of tRNAs. A 3'-hydroxy group is left at the tRNA terminus and a 5'-phosphoryl group is left at the trailer molecule.. Functionally, zinc phosphodiesterase, which displays some tRNA 3'-processing endonuclease activity. Probably involved in tRNA maturation, by removing a 3'-trailer from precursor tRNA. This is Ribonuclease Z from Methanocaldococcus jannaschii (strain ATCC 43067 / DSM 2661 / JAL-1 / JCM 10045 / NBRC 100440) (Methanococcus jannaschii).